Here is a 312-residue protein sequence, read N- to C-terminus: Probable carboxylesterase 7 (312 aa).

M1 is modified (N-acetylmethionine). Residues H75–G77 carry the Involved in the stabilization of the negatively charged intermediate by the formation of the oxyanion hole motif. Catalysis depends on residues S159, D255, and H287.

It belongs to the 'GDXG' lipolytic enzyme family. As to expression, expressed in leaves, stems, flowers and siliques.

The enzyme catalyses a carboxylic ester + H2O = an alcohol + a carboxylate + H(+). Its function is as follows. Carboxylesterase acting on esters with varying acyl chain length. The protein is Probable carboxylesterase 7 (CXE7) of Arabidopsis thaliana (Mouse-ear cress).